The chain runs to 340 residues: Methionyl-tRNA formyltransferase (340 aa).

(6S)-5,6,7,8-tetrahydrofolate is bound at residue Ser110–Pro113.

Belongs to the Fmt family.

The enzyme catalyses L-methionyl-tRNA(fMet) + (6R)-10-formyltetrahydrofolate = N-formyl-L-methionyl-tRNA(fMet) + (6S)-5,6,7,8-tetrahydrofolate + H(+). In terms of biological role, attaches a formyl group to the free amino group of methionyl-tRNA(fMet). The formyl group appears to play a dual role in the initiator identity of N-formylmethionyl-tRNA by promoting its recognition by IF2 and preventing the misappropriation of this tRNA by the elongation apparatus. The protein is Methionyl-tRNA formyltransferase of Synechococcus sp. (strain WH7803).